The chain runs to 332 residues: L-lactate dehydrogenase A chain (332 aa).

Residues 29 to 57 (GAVG…VEDK) and arginine 99 contribute to the NAD(+) site. The substrate site is built by arginine 106, asparagine 138, and arginine 169. Asparagine 138 is a binding site for NAD(+). Catalysis depends on histidine 193, which acts as the Proton acceptor. Threonine 248 is a binding site for substrate.

This sequence belongs to the LDH/MDH superfamily. LDH family. Homotetramer.

Its subcellular location is the cytoplasm. It carries out the reaction (S)-lactate + NAD(+) = pyruvate + NADH + H(+). It participates in fermentation; pyruvate fermentation to lactate; (S)-lactate from pyruvate: step 1/1. Interconverts simultaneously and stereospecifically pyruvate and lactate with concomitant interconversion of NADH and NAD(+). This is L-lactate dehydrogenase A chain (LDHA) from Alligator mississippiensis (American alligator).